We begin with the raw amino-acid sequence, 284 residues long: MEMO1 family protein YG5714_2180 (284 aa).

The protein belongs to the MEMO1 family.

The protein is MEMO1 family protein YG5714_2180 of Saccharolobus islandicus (strain Y.G.57.14 / Yellowstone #1) (Sulfolobus islandicus).